The sequence spans 514 residues: Putative thymidine phosphorylase (514 aa).

The protein belongs to the thymidine/pyrimidine-nucleoside phosphorylase family. Type 2 subfamily.

It carries out the reaction thymidine + phosphate = 2-deoxy-alpha-D-ribose 1-phosphate + thymine. This is Putative thymidine phosphorylase from Sphingopyxis alaskensis (strain DSM 13593 / LMG 18877 / RB2256) (Sphingomonas alaskensis).